The chain runs to 142 residues: Hemoglobin subunit alpha (142 aa).

The 141-residue stretch at 2–142 (VLSATDKSNV…VSTVLTSKYR (141 aa)) folds into the Globin domain. Phosphoserine is present on Ser-4. Lys-8 and Lys-12 each carry N6-succinyllysine. At Lys-17 the chain carries N6-acetyllysine; alternate. Lys-17 carries the N6-succinyllysine; alternate modification. Tyr-25 carries the phosphotyrosine modification. Ser-36 is modified (phosphoserine). Residue Lys-41 is modified to N6-succinyllysine. Ser-50 is subject to Phosphoserine. Residue His-59 coordinates O2. Residue His-88 participates in heme b binding. The residue at position 103 (Ser-103) is a Phosphoserine. Thr-109 is modified (phosphothreonine). Ser-125 is modified (phosphoserine). A phosphothreonine mark is found at Thr-135 and Thr-138. Residue Ser-139 is modified to Phosphoserine.

Belongs to the globin family. As to quaternary structure, heterotetramer of two alpha chains and two beta chains. In terms of tissue distribution, red blood cells.

Functionally, involved in oxygen transport from the lung to the various peripheral tissues. Hemopressin acts as an antagonist peptide of the cannabinoid receptor CNR1. Hemopressin-binding efficiently blocks cannabinoid receptor CNR1 and subsequent signaling. The sequence is that of Hemoglobin subunit alpha (HBA) from Alces alces alces (European moose).